Consider the following 172-residue polypeptide: Bone marrow stromal antigen 2 (172 aa).

Residues 1–30 (MAPSFYHYLPVPMDEMGGKQGWGSHRQWLG) lie on the Cytoplasmic side of the membrane. A helical; Signal-anchor for type II membrane protein membrane pass occupies residues 31-51 (AAILVVLFGVTLVILTIYFAV). Residues 52–152 (TANSVACRDG…ETSSTVQVNS (101 aa)) are Extracellular-facing. N-linked (GlcNAc...) asparagine glycosylation is present at N70. The stretch at 74–147 (LLQRQLTRTQ…LRIQKETSST (74 aa)) forms a coiled coil. Residue N94 is glycosylated (N-linked (GlcNAc...) asparagine; atypical). N97 carries N-linked (GlcNAc...) asparagine glycosylation. The GPI-anchor amidated serine moiety is linked to residue S152. Residues 153-172 (GSSMVVSSLLVLKVSLFLLF) constitute a propeptide, removed in mature form.

As to quaternary structure, parallel homodimer; disulfide-linked. May form homotetramers under reducing conditions. Isoform 1 and isoform 2 form homodimers and also heterodimers with each other. Dimerization is essential for its antiviral activity. Interacts (via cytoplasmic domain) with ARHGAP44. Interacts with MMP14 (via C-terminal cytoplasmic tail). Interacts with LILRA4/ILT7. Interacts with RNF115. In naive mice, specifically expressed on type I interferon-producing cells (at protein level).

The protein localises to the golgi apparatus. It localises to the trans-Golgi network. The protein resides in the cell membrane. It is found in the late endosome. Its subcellular location is the membrane raft. The protein localises to the cytoplasm. It localises to the apical cell membrane. Functionally, IFN-induced antiviral host restriction factor which efficiently blocks the release of diverse mammalian enveloped viruses by directly tethering nascent virions to the membranes of infected cells. Acts as a direct physical tether, holding virions to the cell membrane and linking virions to each other. The tethered virions can be internalized by endocytosis and subsequently degraded or they can remain on the cell surface. In either case, their spread as cell-free virions is restricted. Its target viruses belong to diverse families, including retroviridae: human immunodeficiency virus type 1 (HIV-1), mouse mammary tumor virus (MMTV) and murine leukemia virus (MLV), filoviridae: ebola virus (EBOV), arenaviridae: lassa virus (LASV), and rhabdoviridae: vesicular stomatitis virus (VSV). Can inhibit cell surface proteolytic activity of MMP14 causing decreased activation of MMP15 which results in inhibition of cell growth and migration. Can stimulate signaling by LILRA4/ILT7 and consequently provide negative feedback to the production of IFN by plasmacytoid dendritic cells in response to viral infection. Plays a role in the organization of the subapical actin cytoskeleton in polarized epithelial cells. The sequence is that of Bone marrow stromal antigen 2 (Bst2) from Mus musculus (Mouse).